Here is a 350-residue protein sequence, read N- to C-terminus: Putative isomerase YbhH (350 aa).

The protein belongs to the PrpF family.

The chain is Putative isomerase YbhH (ybhH) from Escherichia coli O6:H1 (strain CFT073 / ATCC 700928 / UPEC).